Reading from the N-terminus, the 289-residue chain is Caffeoylpyruvate hydrolase (289 aa).

The a divalent metal cation site is built by glutamate 140, glutamate 142, and aspartate 171.

Belongs to the FAH family. In terms of assembly, homodimer. It depends on Mg(2+) as a cofactor. Mn(2+) serves as cofactor.

The enzyme catalyses (E)-caffeoylpyruvate + H2O = (E)-caffeate + pyruvate + H(+). It participates in secondary metabolite biosynthesis. Functionally, caffeoylpyruvate hydrolase; part of the gene cluster that mediates the fungal bioluminescence cycle. Involved in the recycling of oxyluciferin, a pyruvic acid adduct of caffeic acid, to caffeic acid. The fungal bioluminescence cycle begins with the hispidin synthetase that catalyzes the formation of hispidin which is further hydroxylated by the hispidin-3-hydroxylase, yielding the fungal luciferin 3-hydroxyhispidin. The luciferase then produces an endoperoxide as a high-energy intermediate with decomposition that yields oxyluciferin (also known as caffeoylpyruvate) and light emission. Oxyluciferin can be recycled to caffeic acid by caffeoylpyruvate hydrolase. The chain is Caffeoylpyruvate hydrolase from Neonothopanus nambi (Agaricus nambi).